The chain runs to 1130 residues: DNA-directed RNA polymerase I subunit rpa2 (1130 aa).

Residues 1070–1096 (CKLCGSTLTIYSKKDYSNQTVSECKSC) form a C4-type zinc finger.

The protein belongs to the RNA polymerase beta chain family. In terms of assembly, component of the RNA polymerase I (Pol I) complex consisting of 14 subunits.

Its subcellular location is the nucleus. The protein localises to the nucleolus. It catalyses the reaction RNA(n) + a ribonucleoside 5'-triphosphate = RNA(n+1) + diphosphate. In terms of biological role, DNA-dependent RNA polymerase catalyzes the transcription of DNA into RNA using the four ribonucleoside triphosphates as substrates. Second largest core component of RNA polymerase I which synthesizes ribosomal RNA precursors. Proposed to contribute to the polymerase catalytic activity and forms the polymerase active center together with the largest subunit. Pol I is composed of mobile elements and RPA2 is part of the core element with the central large cleft and probably a clamp element that moves to open and close the cleft. This is DNA-directed RNA polymerase I subunit rpa2 (polr1b) from Dictyostelium discoideum (Social amoeba).